Here is a 166-residue protein sequence, read N- to C-terminus: Cyclic pyranopterin monophosphate synthase (166 aa).

Residues 75-77 (MCH) and 115-116 (ME) contribute to the substrate site. D130 is an active-site residue.

This sequence belongs to the MoaC family. In terms of assembly, homohexamer; trimer of dimers.

It carries out the reaction (8S)-3',8-cyclo-7,8-dihydroguanosine 5'-triphosphate = cyclic pyranopterin phosphate + diphosphate. The protein operates within cofactor biosynthesis; molybdopterin biosynthesis. In terms of biological role, catalyzes the conversion of (8S)-3',8-cyclo-7,8-dihydroguanosine 5'-triphosphate to cyclic pyranopterin monophosphate (cPMP). This is Cyclic pyranopterin monophosphate synthase from Shouchella clausii (strain KSM-K16) (Alkalihalobacillus clausii).